The following is an 882-amino-acid chain: MRTAEIREKFLSFFEGKGHLRLPSFSLIPEDDPSLLFTSAGMAPLKPYFLGAKPIFGGREWRRVTTCQECLRVGDIENVGRTSRHNTYFEMLGNFSFGDYFKKEAILWAWEFLTEHLRLDPGRLWVTVFEDDDEAYEIWRDLVGVPEERIGRFGEDENYWPGGAITHGPNGPSGPCSEIFYDRGPAYGTPDETGPNTGSGDRFVEIWNLVFTQYDRQGPIPGPGILKPLPQKNIDTGMGLYRVAAILQDVEDFYRTDTFFPIIQEVARMSGRPYEGKTSVSHRVIADHVRAVVAALSDGATFSNTGRGYVIRRLLRRALRHGYLLGLSDPFLHRLAPLVAELLGDFYPEMRENLPAVEKQIRLEEERFLETLEGGLKRLDALLSGLKPGEVLPGKEAFRLYDTYGFPLDLTVEIAAERGYGVDTEGFQKAMEEQQSRSRAAMAFEREIFKKGAQVLEELYAERGATEFLGYNALEAEAEVLALLAGDQSLLEAGPGTEVQVVLDKTPFYAEGGGQIGDFGLLEWPGGRARVETTRKTERGIFLHKARVEEGVLRVGERVRAVVDPRRRDTERNHTATHLLHAALRAVLGPHVRQAGSLVAPDRLRFDFTHPEPLKPEELERVELLVNRWIMADFPVTWRYMPLEEARKEGAMALFGEKYGEVVRVVRVEGSPLEGLESKELCGGCHVRRTGEIGAFLIRSEEAVSAGVRRIEAVTGEEAIRFARGSLNRLKALAERLEVGEAALEERLEKLLAELKEKEREVESLKARLVQAALGGGGGASLEEKGGLRWTVAELPGLDAKALRQAADDLVARGADVALVLSGGQAVLKLSPKAQGMGLEAGALFRALAEKAGGRGGGKGALAQGGGLDPRKAREALPGLLP.

The Zn(2+) site is built by His574, His578, Cys682, and His686. Residues 853–882 (GGRGGGKGALAQGGGLDPRKAREALPGLLP) form a disordered region. A compositionally biased stretch (gly residues) spans 854–868 (GRGGGKGALAQGGGL).

It belongs to the class-II aminoacyl-tRNA synthetase family. It depends on Zn(2+) as a cofactor.

The protein resides in the cytoplasm. It carries out the reaction tRNA(Ala) + L-alanine + ATP = L-alanyl-tRNA(Ala) + AMP + diphosphate. Catalyzes the attachment of alanine to tRNA(Ala) in a two-step reaction: alanine is first activated by ATP to form Ala-AMP and then transferred to the acceptor end of tRNA(Ala). Also edits incorrectly charged Ser-tRNA(Ala) and Gly-tRNA(Ala) via its editing domain. The polypeptide is Alanine--tRNA ligase (Thermus thermophilus (strain ATCC BAA-163 / DSM 7039 / HB27)).